Reading from the N-terminus, the 49-residue chain is Large ribosomal subunit protein bL33B (49 aa).

Belongs to the bacterial ribosomal protein bL33 family.

In Staphylococcus epidermidis (strain ATCC 12228 / FDA PCI 1200), this protein is Large ribosomal subunit protein bL33B (rpmG2).